Here is a 140-residue protein sequence, read N- to C-terminus: Baculoviral IAP repeat-containing protein 5 (140 aa).

Residues 18–88 form a BIR repeat; it reads RIATFKNWPF…KHSPGCAFLT (71 aa). Position 23 is an N6-acetyllysine (Lys-23). At Thr-34 the chain carries Phosphothreonine; by CDK1 and CDK15. Residue Thr-48 is modified to Phosphothreonine. Residues Cys-57, Cys-60, Glu-76, His-77, His-80, and Cys-84 each coordinate Zn(2+). An N6-acetyllysine mark is found at Lys-90, Lys-110, Lys-112, and Lys-115. Positions 113–129 are enriched in basic and acidic residues; that stretch reads IAKETNNKQKEFEETAK. The interval 113–140 is disordered; it reads IAKETNNKQKEFEETAKTTRQSIEQLAA. A Phosphothreonine; by AURKB modification is found at Thr-117. Residue Lys-129 is modified to N6-acetyllysine. Polar residues predominate over residues 130 to 140; sequence TTRQSIEQLAA.

Belongs to the IAP family. As to quaternary structure, monomer or homodimer. Exists as a homodimer in the apo state and as a monomer in the CPC-bound state. The monomer protects cells against apoptosis more efficiently than the dimer. Only the dimeric form is capable of enhancing tubulin stability in cells. When phosphorylated, interacts with LAMTOR5/HBXIP; the resulting complex binds pro-CASP9, as well as active CASP9, but much less efficiently. Component of the chromosomal passenger complex (CPC) composed of at least BIRC5/survivin, CDCA8/borealin, INCENP, AURKB or AURKC; in the complex forms a triple-helix bundle-based subcomplex with INCENP and CDCA8. Interacts with JTB. Interacts (via BIR domain) with histone H3 phosphorylated at 'Thr-3' (H3pT3). Interacts with EVI5. Interacts with GTP-bound RAN in both the S and M phases of the cell cycle. Interacts with USP9X. Interacts with tubulin. Interacts with BIRC2/c-IAP1. The acetylated form at Lys-129 interacts with STAT3. The monomeric form deacetylated at Lys-129 interacts with XPO1/CRM1. The monomeric form interacts with XIAP/BIRC4. Both the dimeric and monomeric form can interact with DIABLO/SMAC. Interacts with BIRC6/bruce. Interacts with FBXL7; this interaction facilitates the polyubiquitination and subsequent proteasomal degradation of BIRC5 by the SCF(FBXL7) E3 ubiquitin-protein ligase complex. Post-translationally, ubiquitinated by the Cul9-RING ubiquitin-protein ligase complex, leading to its degradation. Ubiquitination is required for centrosomal targeting. Deubiquitinated by USP35 or USP38; leading to stabilization. In terms of processing, acetylation at Lys-129 results in its homodimerization, while deacetylation promotes the formation of monomers which heterodimerize with XPO1/CRM1 which facilitates its nuclear export. The acetylated form represses STAT3 transactivation. The dynamic equilibrium between its acetylation and deacetylation at Lys-129 determines its interaction with XPO1/CRM1, its subsequent subcellular localization, and its ability to inhibit STAT3 transactivation. In vitro phosphorylation at Thr-117 by AURKB prevents interaction with INCENP and localization to mitotic chromosomes. Phosphorylation at Thr-48 by CK2 is critical for its mitotic and anti-apoptotic activities. Phosphorylation at Thr-34 by CDK15 is critical for its anti-apoptotic activity.

The protein resides in the cytoplasm. It is found in the nucleus. Its subcellular location is the chromosome. It localises to the centromere. The protein localises to the cytoskeleton. The protein resides in the spindle. It is found in the kinetochore. Its subcellular location is the midbody. Multitasking protein that has dual roles in promoting cell proliferation and preventing apoptosis. Component of a chromosome passage protein complex (CPC) which is essential for chromosome alignment and segregation during mitosis and cytokinesis. Acts as an important regulator of the localization of this complex; directs CPC movement to different locations from the inner centromere during prometaphase to midbody during cytokinesis and participates in the organization of the center spindle by associating with polymerized microtubules. Involved in the recruitment of CPC to centromeres during early mitosis via association with histone H3 phosphorylated at 'Thr-3' (H3pT3) during mitosis. The complex with RAN plays a role in mitotic spindle formation by serving as a physical scaffold to help deliver the RAN effector molecule TPX2 to microtubules. May counteract a default induction of apoptosis in G2/M phase. The acetylated form represses STAT3 transactivation of target gene promoters. May play a role in neoplasia. Inhibitor of CASP3 and CASP7. Essential for the maintenance of mitochondrial integrity and function. The polypeptide is Baculoviral IAP repeat-containing protein 5 (Birc5) (Mus musculus (Mouse)).